A 273-amino-acid polypeptide reads, in one-letter code: Esterase pigG (273 aa).

Catalysis depends on charge relay system residues serine 122, aspartate 215, and histidine 243.

The protein belongs to the LovG family.

The protein operates within secondary metabolite biosynthesis. In terms of biological role, esterase; part of the gene cluster that mediates the biosynthesis of azaphilone pigments (MonAzPs), a complex mixture of compounds with a common azaphilone skeleton very widely used as food colorants. Within the pathway, pigG may assist the nrPKS pigA in the biosynthesis of the hexaketide precursor. The first step of the pathway is performed by the nrPKS pigA that forms the hexaketide precursor from successive condensations of five malonyl-CoA units, with a simple acetyl-CoA starter unit. The role of esterase pigG is not clear, but it may play at most a supplementary role in the formation of the benzaldehyde produced by the pigA nrPKS. This very reactive benzaldehyde is intercepted by the pigC ketoreductase that to provide the first stable enzyme-free MonAzPs intermediate, 6-(4-hydroxy-2-oxopentyl)-3-methyl-2,4-dioxocyclohexane carbaldehyde, also known as M7PKS-1. The FAD-dependent monooxygenase pigN hydroxylates M7PKS-1 at C-4, which triggers the formation of the pyran ring. PigJ, pigK and pigD are involved in the acetylation of the pyran ring. PigJ and pigK form the two subunits of a dedicated fungal FAS that produces the side chain fatty acyl moiety of MonAzPs and pigD transfers the fatty acyl chain to the C-4 alcohol. PigM and pigO are involved in the elimination of the omega-1 alcohol. PigM acts as an O-acetyltransferase that synthesizes the putative O-11 acetyl intermediate whereas pigO eliminates acetic acid to yield an intermediate with a C10(11) double bond. The dehydration of the C-11 alcohol followed by the reduction of the C6(7) double bond by the NAD(P)H-dependent oxidoreductase pigE increases the electrophilicity of the C-5 ketone of the resulting acyl benzopyran. This in turn sets up the C-5 ketone for an intramolecular Knoevenagel aldol condensation with the C-20 enol of the side chain. This condensation affords the characteristic linear tricyclic carbon skeletons of the yellow pigments that serve as the common precursors for the classical yellow pigments monascin and ankaflavin, orange pigments rubopunctatin and monascorubrin, and red pigments ribropunctamine and monascorubramine. The FAD-dependent oxidoreductase pigF is especially invoved in the biosynthesis of orange and red pigments via desaturation of C6(7). The chain is Esterase pigG from Monascus ruber (Mold).